The chain runs to 561 residues: MSNNPRSQVITQGTQRSPNRAMLRAVGFGDDDFTKPIVGIANGYSTITPCNMGINDLALRAEAGLRTAGAMPQLFGTITISDGISMGTEGMKYSLVSREVIADSIETVCNGQRMDGVLAIGGCDKNMPGAMIAMARLNIPSIFVYGGTIKPGHYAGEDLTVVSAFEAVGQYSAGKIDEETLYGIERNACPGAGSCGGMFTANTMSSAFEAMGMSLPYSSTMAAVDGEKADSTEESAKVLVEAIKKQILPSQILTRKAFENAIAVIMAVGGSTNAVLHLLAIANTIGVPLSLDDFETIRHKVPVLCDLKPSGKYVTTNLHAAGGIPQVMKILLVNGILHGDALTITGQTIAEVLADIPDQPPAGQDVIHSWDDPVYQEGHLAVLKGNLATEGSVAKISGVKKPVITGPAKVFESEEDCLEAILAGKIQAGDVVVVRYEGPKGGPGMREMLAPTSAIIGAGLGDSVGLITDGRFSGGTYGLVVGHVAPEAYVGGAIALVQEGDQITIDAGKRLLQLNISEEELAQRRAQWTPPQPRYPRGILAKYAKLVSSSSLGAVTDIDLF.

Cys50 provides a ligand contact to [2Fe-2S] cluster. Residue Asp82 participates in Mg(2+) binding. Cys123 is a binding site for [2Fe-2S] cluster. Asp124 and Lys125 together coordinate Mg(2+). Lys125 is modified (N6-carboxylysine). Cys195 is a [2Fe-2S] cluster binding site. Glu447 lines the Mg(2+) pocket. Ser473 (proton acceptor) is an active-site residue.

The protein belongs to the IlvD/Edd family. As to quaternary structure, homodimer. The cofactor is [2Fe-2S] cluster. It depends on Mg(2+) as a cofactor.

It catalyses the reaction (2R)-2,3-dihydroxy-3-methylbutanoate = 3-methyl-2-oxobutanoate + H2O. The catalysed reaction is (2R,3R)-2,3-dihydroxy-3-methylpentanoate = (S)-3-methyl-2-oxopentanoate + H2O. The protein operates within amino-acid biosynthesis; L-isoleucine biosynthesis; L-isoleucine from 2-oxobutanoate: step 3/4. It functions in the pathway amino-acid biosynthesis; L-valine biosynthesis; L-valine from pyruvate: step 3/4. Its function is as follows. Functions in the biosynthesis of branched-chain amino acids. Catalyzes the dehydration of (2R,3R)-2,3-dihydroxy-3-methylpentanoate (2,3-dihydroxy-3-methylvalerate) into 2-oxo-3-methylpentanoate (2-oxo-3-methylvalerate) and of (2R)-2,3-dihydroxy-3-methylbutanoate (2,3-dihydroxyisovalerate) into 2-oxo-3-methylbutanoate (2-oxoisovalerate), the penultimate precursor to L-isoleucine and L-valine, respectively. The protein is Dihydroxy-acid dehydratase of Synechocystis sp. (strain ATCC 27184 / PCC 6803 / Kazusa).